A 103-amino-acid chain; its full sequence is Matrix Gla protein (103 aa).

The N-terminal stretch at 1-19 (MKSLLPLAILAALAVAALC) is a signal peptide. Glu21 is modified (4-carboxyglutamate). Residues Ser22, Ser25, and Ser28 each carry the phosphoserine modification. A Gla domain is found at 51-97 (HAKAQERVRELNKPAQEINREACDDYKLCERYALIYGYNAAYNRYFR). 4-carboxyglutamate is present on residues Glu56, Glu60, Glu67, and Glu71. Cys73 and Cys79 are oxidised to a cystine.

It belongs to the osteocalcin/matrix Gla protein family. Post-translationally, requires vitamin K-dependent gamma-carboxylation for its function.

The protein localises to the secreted. Its function is as follows. Associates with the organic matrix of bone and cartilage. Thought to act as an inhibitor of bone formation. The polypeptide is Matrix Gla protein (Mgp) (Rattus norvegicus (Rat)).